A 1055-amino-acid chain; its full sequence is Activated CDC42 kinase 1 (1055 aa).

The tract at residues 1-110 (MQPEEGTGWL…PSPTPGSLPG (110 aa)) is SAM-like domain. Positions 91–110 (SQHSQSTFRKPSPTPGSLPG) are disordered. Thr-113 carries the post-translational modification Phosphothreonine. A Protein kinase domain is found at 126 to 385 (LRLLEKLGDG…PTFVALRDFL (260 aa)). Residues 132–140 (LGDGSFGVV) and Lys-158 contribute to the ATP site. Residue Asp-252 is the Proton acceptor of the active site. Tyr-284 bears the Phosphotyrosine; by SRC and autocatalysis mark. Residues 388-448 (AQPTDMRALQ…PRNVVTSVAG (61 aa)) enclose the SH3 domain. The CRIB domain occupies 454 to 466 (ISQPLQNSFIHTG). The tract at residues 505–548 (RPTQHLGRVKREPPPRPPQPAIFTQKTTYDPVSEDPDPLSSDFK) is disordered. 2 positions are modified to phosphotyrosine: Pro-518 and Tyr-533. The tract at residues 638–667 (DWDARPLPPPPAYDDVAQDEDDFEVCSINS) is required for interaction with SRC. Residues 647 to 650 (PPAY) are required for interaction with NEDD4. A disordered region spans residues 737-855 (TGQLTPSPTP…QVIQAPGPRA (119 aa)). Residues 748 to 891 (GDDKPQVPPR…PYLERYQRFL (144 aa)) form an EBD domain region. Composition is skewed to pro residues over residues 753–764 (QVPPRVPIPPRP) and 787–798 (PASPPRVPPREP). Residues 817–827 (PLPHRLSSSPG) are compositionally biased toward low complexity. Tyr-842 carries the phosphotyrosine modification. Position 854 is an omega-N-methylarginine (Arg-854). Phosphotyrosine is present on residues Tyr-874 and Tyr-887. Ser-896 bears the Phosphoserine mark. The disordered stretch occupies residues 896-952 (SPEEPAALPVPPLLPPPSTPAPAAPTATVRPMPQAAPDPKANFSTNNSNPGARPPSL). Positions 903 to 918 (LPVPPLLPPPSTPAPA) are enriched in pro residues. A UBA domain is found at 973 to 1013 (PADKVQMLQAMVHGVTTEECQAALQSHSWSVQRAAQYLKVE).

This sequence belongs to the protein kinase superfamily. Tyr protein kinase family. In terms of assembly, homodimer. Interacts with CSPG4 (activated). Interacts with MERTK (activated); stimulates autophosphorylation. May interact (phosphorylated) with HSP90AB1; maintains kinase activity. Interacts with NPHP1. Interacts with SNX9 (via SH3 domain). Interacts with SRC (via SH2 and SH3 domain). Part of a collagen stimulated complex involved in cell migration composed of CDC42, CRK, TNK2 and BCAR1/p130cas. Interacts with BCAR1/p130cas via SH3 domains. Forms complexes with GRB2 and numerous receptor tyrosine kinases (RTK) including LTK, AXL or PDGFRL, in which GRB2 promotes RTK recruitment by TNK2. Interacts with CDC42. Interacts with EGFR, and this interaction is dependent on EGF stimulation and kinase activity of EGFR. Interacts (via kinase domain) with AKT1. Interacts with NEDD4 (via WW3 domain). NEDD4L and EGF promote association with NEDD4. Mg(2+) is required as a cofactor. In terms of processing, autophosphorylation regulates kinase activity. Phosphorylation on Tyr-533 is required for interaction with SRC and is observed during association with clathrin-coated pits. Post-translationally, polyubiquitinated by NEDD4 and NEDD4L. Degradation can be induced by EGF and is lysosome-dependent. As to expression, ubiquitously present in all tissues tested. Highly expressed in the adult central nervous system (CNS); hippocampus, neocortex, and cerebellum, both at dendritic spines and presynaptic axon terminals. Levels are strongly increased during enhanced neural activity.

The protein resides in the cell membrane. Its subcellular location is the nucleus. It localises to the endosome. The protein localises to the cell junction. It is found in the adherens junction. The protein resides in the cytoplasmic vesicle membrane. Its subcellular location is the cytoplasmic vesicle. It localises to the clathrin-coated vesicle. The protein localises to the membrane. It is found in the clathrin-coated pit. The protein resides in the cytoplasm. Its subcellular location is the cytosol. It carries out the reaction L-tyrosyl-[protein] + ATP = O-phospho-L-tyrosyl-[protein] + ADP + H(+). The catalysed reaction is L-seryl-[protein] + ATP = O-phospho-L-seryl-[protein] + ADP + H(+). It catalyses the reaction L-threonyl-[protein] + ATP = O-phospho-L-threonyl-[protein] + ADP + H(+). Functionally, non-receptor tyrosine-protein and serine/threonine-protein kinase that is implicated in cell spreading and migration, cell survival, cell growth and proliferation. Transduces extracellular signals to cytosolic and nuclear effectors. Phosphorylates AKT1, AR, MCF2, WASL and WWOX. Implicated in trafficking and clathrin-mediated endocytosis through binding to epidermal growth factor receptor (EGFR) and clathrin. Binds to both poly- and mono-ubiquitin and regulates ligand-induced degradation of EGFR, thereby contributing to the accumulation of EGFR at the limiting membrane of early endosomes. Downstream effector of CDC42 which mediates CDC42-dependent cell migration via phosphorylation of BCAR1. May be involved both in adult synaptic function and plasticity and in brain development. Activates AKT1 by phosphorylating it on 'Tyr-176'. Phosphorylates AR on 'Tyr-267' and 'Tyr-363' thereby promoting its recruitment to androgen-responsive enhancers (AREs). Phosphorylates WWOX on 'Tyr-287'. Phosphorylates MCF2, thereby enhancing its activity as a guanine nucleotide exchange factor (GEF) toward Rho family proteins. Contributes to the control of AXL receptor levels. Confers metastatic properties on cancer cells and promotes tumor growth by negatively regulating tumor suppressor such as WWOX and positively regulating pro-survival factors such as AKT1 and AR. The sequence is that of Activated CDC42 kinase 1 (Tnk2) from Mus musculus (Mouse).